A 272-amino-acid chain; its full sequence is Rhomboid-type serine protease B (272 aa).

Transmembrane regions (helical) follow at residues 30–50, 72–92, 103–123, 133–153, 164–184, and 186–206; these read LVLLVILAFWLLELQTIWSVV, PFIHVGFFHAFVNLLALTPLL, TAVALFIGPLSTFPAGIYILV, AVVGASVWIFLLLGSEAIKTF, TKIPTWTSPLFACALVSIFVP, and TSFLGHLSAIIIGYLLGLGYL. The active-site Nucleophile is serine 138. The active site involves histidine 191.

It belongs to the peptidase S54 family.

The protein localises to the membrane. It carries out the reaction Cleaves type-1 transmembrane domains using a catalytic dyad composed of serine and histidine that are contributed by different transmembrane domains.. In terms of biological role, rhomboid protease that catalyzes intramembrane proteolysis. Required for transcription factor srbA activation by mediating its release from the membrane and thereby regulating its activity under hypoxic conditions. Essential for iron homeostasis and resistance to azoles such as voriconazole. Required for virulence in murine models of invasive pulmonary aspergillosis (IPA). This Aspergillus fumigatus (strain ATCC MYA-4609 / CBS 101355 / FGSC A1100 / Af293) (Neosartorya fumigata) protein is Rhomboid-type serine protease B.